The following is a 116-amino-acid chain: Ribonuclease P protein component (116 aa).

Belongs to the RnpA family. In terms of assembly, consists of a catalytic RNA component (M1 or rnpB) and a protein subunit.

It carries out the reaction Endonucleolytic cleavage of RNA, removing 5'-extranucleotides from tRNA precursor.. Its function is as follows. RNaseP catalyzes the removal of the 5'-leader sequence from pre-tRNA to produce the mature 5'-terminus. It can also cleave other RNA substrates such as 4.5S RNA. The protein component plays an auxiliary but essential role in vivo by binding to the 5'-leader sequence and broadening the substrate specificity of the ribozyme. In Pseudanabaena sp. (strain PCC 6903), this protein is Ribonuclease P protein component.